The primary structure comprises 763 residues: MKYNQFSFIPRPIAIAEQELQALGFDITHQQADKKALENFCRKIFFNYKDTDYPLHQLIADFETDLLTFFNSERPLTADIFYTISLQLLGFIPHVDFTNTTDFLEKIAFPINYQKGHILEALYHLLVSRQKSGMTLLDDLISKGLIPVDNNYHFFNGKSLATFDTTDLIREVVYVQSPLDTDQDGQLDLIKVNIIRPKTSHQLPTMMTASPYHQGTNVVANDKKLYKMEGDLAVKPARTINVETRDFEPLAAPDVDLPIGESEERFNFIDPYTLNDYFLARGFANIYVSGVGTAGSDGFMTSGDYAQVESFKAVIDWLNGKSIAFSSHRRDQKVVADWASGLVCTTGKSYLGTMSTALATTGVEGLKVIIAESAISSWYDYYRENGLVCSPGGYPGEDLDVLTELTYSRNLLPGDYLRNNAHYQEFLDEQSAQLDRASGDYNQFWHDRNYLPHADKVKATCVFTHGLQDWNVKPRHIFNIFNALPDTVEKHAFLHHGEHVYMHNWQSIDFRESMNTLLSEKMLGQDNHFVLPTLIWQDNSQEQAWTSLAEFGSSNQATLALGTDQKIIDNHYAKAEFERYSKNFRTFKSELFTGKANAICLDLPIKNDYHINGQITLHLTVKSSENKGILSAQVLDYGEKKRFKDVPSVLDLYAIDNGCNFSREALKELPFTKAKERVITKGVLNLQNRTDLLTIEDIPANEWMTFDFTLQPSIYKLEKGDTLRVLLYTTDFEHTIRDNSNYILTVDLDKSNLEIPIENNVGL.

Active-site charge relay system residues include Ser-349, Asp-469, and His-499.

This sequence belongs to the peptidase S15 family. In terms of assembly, homodimer.

Its subcellular location is the cytoplasm. It carries out the reaction Hydrolyzes Xaa-Pro-|- bonds to release unblocked, N-terminal dipeptides from substrates including Ala-Pro-|-p-nitroanilide and (sequentially) Tyr-Pro-|-Phe-Pro-|-Gly-Pro-|-Ile.. Functionally, removes N-terminal dipeptides sequentially from polypeptides having unsubstituted N-termini provided that the penultimate residue is proline. This chain is Xaa-Pro dipeptidyl-peptidase, found in Streptococcus macedonicus (Streptococcus gallolyticus macedonicus).